A 380-amino-acid chain; its full sequence is Cytochrome b (380 aa).

Helical transmembrane passes span 34-54 (FGSLLGICLLTQILTGLLLAM), 78-99 (WLIRNLHANGASFFFICIYLHI), 114-134 (WNTGVILLLTLMATAFVGYVL), and 179-199 (FFALHFLLPFMIAGLTLIHLT). Heme b is bound by residues His-84 and His-98. Residues His-183 and His-197 each coordinate heme b. His-202 contributes to the a ubiquinone binding site. Transmembrane regions (helical) follow at residues 227–247 (LKDILGFMLLLLPLTTLALFS), 289–309 (LGGVLALAASVLVLFLAPFLH), 321–341 (ISQLLFWILVANLFILTWVGS), and 348–368 (FIIIGQLASLTYFTILLILFP).

Belongs to the cytochrome b family. The cytochrome bc1 complex contains 11 subunits: 3 respiratory subunits (MT-CYB, CYC1 and UQCRFS1), 2 core proteins (UQCRC1 and UQCRC2) and 6 low-molecular weight proteins (UQCRH/QCR6, UQCRB/QCR7, UQCRQ/QCR8, UQCR10/QCR9, UQCR11/QCR10 and a cleavage product of UQCRFS1). This cytochrome bc1 complex then forms a dimer. It depends on heme b as a cofactor.

It localises to the mitochondrion inner membrane. In terms of biological role, component of the ubiquinol-cytochrome c reductase complex (complex III or cytochrome b-c1 complex) that is part of the mitochondrial respiratory chain. The b-c1 complex mediates electron transfer from ubiquinol to cytochrome c. Contributes to the generation of a proton gradient across the mitochondrial membrane that is then used for ATP synthesis. This chain is Cytochrome b (MT-CYB), found in Puffinus opisthomelas (Black-vented shearwater).